Reading from the N-terminus, the 257-residue chain is 1-(5-phosphoribosyl)-5-[(5-phosphoribosylamino)methylideneamino] imidazole-4-carboxamide isomerase (257 aa).

The active-site Proton acceptor is Asp8. The Proton donor role is filled by Asp129.

This sequence belongs to the HisA/HisF family.

It is found in the cytoplasm. The catalysed reaction is 1-(5-phospho-beta-D-ribosyl)-5-[(5-phospho-beta-D-ribosylamino)methylideneamino]imidazole-4-carboxamide = 5-[(5-phospho-1-deoxy-D-ribulos-1-ylimino)methylamino]-1-(5-phospho-beta-D-ribosyl)imidazole-4-carboxamide. Its pathway is amino-acid biosynthesis; L-histidine biosynthesis; L-histidine from 5-phospho-alpha-D-ribose 1-diphosphate: step 4/9. The sequence is that of 1-(5-phosphoribosyl)-5-[(5-phosphoribosylamino)methylideneamino] imidazole-4-carboxamide isomerase from Trichodesmium erythraeum (strain IMS101).